A 681-amino-acid polypeptide reads, in one-letter code: Type VI secretion system spike protein VgrG2 (681 aa).

The tract at residues 284–309 (AVAGSGKSNSSALQPGQTFSLTEHPN) is disordered. Over residues 289-309 (GKSNSSALQPGQTFSLTEHPN) the composition is skewed to polar residues.

It belongs to the VgrG protein family.

In terms of biological role, part of the type VI secretion system specialized secretion system, which delivers several virulence factors in both prokaryotic and eukaryotic cells during infection. Plays an essential role in bacterial mobility and biofilm formation. In Aeromonas hydrophila, this protein is Type VI secretion system spike protein VgrG2.